A 119-amino-acid chain; its full sequence is UPF0102 protein Nmul_A0195 (119 aa).

Belongs to the UPF0102 family.

The sequence is that of UPF0102 protein Nmul_A0195 from Nitrosospira multiformis (strain ATCC 25196 / NCIMB 11849 / C 71).